Here is a 211-residue protein sequence, read N- to C-terminus: Thioredoxin domain-containing protein 9 homolog (211 aa).

The 111-residue stretch at 68 to 178 (YSEIHSEKDF…LEERIARAQV (111 aa)) folds into the Thioredoxin domain. The span at 184-203 (ESSSLKPKSTTQVRRNVRQS) shows a compositional bias: polar residues. Positions 184 to 211 (ESSSLKPKSTTQVRRNVRQSARSDSDSE) are disordered.

This is Thioredoxin domain-containing protein 9 homolog from Arabidopsis thaliana (Mouse-ear cress).